We begin with the raw amino-acid sequence, 299 residues long: Tyrosine recombinase XerC (299 aa).

One can recognise a Core-binding (CB) domain in the interval 3-87 (PQCQSYLQQF…AIKQWGEFLL (85 aa)). The Tyr recombinase domain maps to 108 to 287 (PLPKNIDVDS…DFQHLAKVYD (180 aa)). Active-site residues include Arg147, Lys171, His239, Arg242, and His265. Tyr274 serves as the catalytic O-(3'-phospho-DNA)-tyrosine intermediate.

It belongs to the 'phage' integrase family. XerC subfamily. Forms a cyclic heterotetrameric complex composed of two molecules of XerC and two molecules of XerD.

It is found in the cytoplasm. In terms of biological role, site-specific tyrosine recombinase, which acts by catalyzing the cutting and rejoining of the recombining DNA molecules. The XerC-XerD complex is essential to convert dimers of the bacterial chromosome into monomers to permit their segregation at cell division. It also contributes to the segregational stability of plasmids. This Shewanella sp. (strain ANA-3) protein is Tyrosine recombinase XerC.